The chain runs to 341 residues: HTH-type transcriptional repressor PurR (341 aa).

The 55-residue stretch at Ala2–Val56 folds into the HTH lacI-type domain. The H-T-H motif DNA-binding region spans Ile4–Asn23. Residues Ser48–Val56 mediate DNA binding. Hypoxanthine is bound by residues Tyr73, Arg190, Thr192, Phe221, and Asp275.

As to quaternary structure, homodimer.

It functions in the pathway purine metabolism; purine nucleotide biosynthesis [regulation]. Its function is as follows. Is the main repressor of the genes involved in the de novo synthesis of purine nucleotides, regulating purB, purC, purEK, purF, purHD, purL, purMN and guaBA expression. PurR is allosterically activated to bind its cognate DNA by binding the purine corepressors, hypoxanthine or guanine, thereby effecting transcription repression. This is HTH-type transcriptional repressor PurR from Shigella dysenteriae serotype 1 (strain Sd197).